We begin with the raw amino-acid sequence, 465 residues long: Cerebellar degeneration-related protein 2-like (465 aa).

3 coiled-coil regions span residues 31 to 64 (AAELGKTLLERNKELEESLQQMYSTNEEQVHEIE), 91 to 142 (ARDL…LEQL), and 188 to 266 (LEQE…YLLA). Positions 282–315 (APEADDPQPGSGDDSNAQDGVSSPAASPSHAVRK) are disordered. Residues Ser308, Ser318, and Ser344 each carry the phosphoserine modification. Residues 350-377 (MSILREVDEQYHALLEKYEELLSKCRQH) are a coiled coil. Residues 382–421 (RHAGVQTSRPISRDSSWRDLLGGEESPGEGKAGEKSLSQH) are disordered. Ser407 carries the phosphoserine modification.

Belongs to the CDR2 family.

The polypeptide is Cerebellar degeneration-related protein 2-like (Cdr2l) (Mus musculus (Mouse)).